Consider the following 252-residue polypeptide: Trans-aconitate 2-methyltransferase (252 aa).

This sequence belongs to the methyltransferase superfamily. Tam family.

It localises to the cytoplasm. The catalysed reaction is trans-aconitate + S-adenosyl-L-methionine = (E)-3-(methoxycarbonyl)pent-2-enedioate + S-adenosyl-L-homocysteine. Its function is as follows. Catalyzes the S-adenosylmethionine monomethyl esterification of trans-aconitate. The chain is Trans-aconitate 2-methyltransferase from Shigella flexneri.